A 475-amino-acid chain; its full sequence is UDP-N-acetylmuramate--L-alanine ligase (475 aa).

125-131 lines the ATP pocket; the sequence is GTHGKTT.

Belongs to the MurCDEF family.

Its subcellular location is the cytoplasm. The catalysed reaction is UDP-N-acetyl-alpha-D-muramate + L-alanine + ATP = UDP-N-acetyl-alpha-D-muramoyl-L-alanine + ADP + phosphate + H(+). The protein operates within cell wall biogenesis; peptidoglycan biosynthesis. Cell wall formation. This is UDP-N-acetylmuramate--L-alanine ligase from Glaesserella parasuis serovar 5 (strain SH0165) (Haemophilus parasuis).